A 242-amino-acid chain; its full sequence is Biosynthetic peptidoglycan transglycosylase (242 aa).

Residues 19–39 (ILVVLAVFWGGGIALFSVVPV) traverse the membrane as a helical segment.

This sequence belongs to the glycosyltransferase 51 family.

It is found in the cell inner membrane. It carries out the reaction [GlcNAc-(1-&gt;4)-Mur2Ac(oyl-L-Ala-gamma-D-Glu-L-Lys-D-Ala-D-Ala)](n)-di-trans,octa-cis-undecaprenyl diphosphate + beta-D-GlcNAc-(1-&gt;4)-Mur2Ac(oyl-L-Ala-gamma-D-Glu-L-Lys-D-Ala-D-Ala)-di-trans,octa-cis-undecaprenyl diphosphate = [GlcNAc-(1-&gt;4)-Mur2Ac(oyl-L-Ala-gamma-D-Glu-L-Lys-D-Ala-D-Ala)](n+1)-di-trans,octa-cis-undecaprenyl diphosphate + di-trans,octa-cis-undecaprenyl diphosphate + H(+). It functions in the pathway cell wall biogenesis; peptidoglycan biosynthesis. Peptidoglycan polymerase that catalyzes glycan chain elongation from lipid-linked precursors. The chain is Biosynthetic peptidoglycan transglycosylase from Citrobacter koseri (strain ATCC BAA-895 / CDC 4225-83 / SGSC4696).